We begin with the raw amino-acid sequence, 143 residues long: Hexaprenyl-diphosphate synthase small subunit ((2E,6E)-farnesyl-diphosphate specific) (143 aa).

In terms of assembly, dimer of heterodimer or heterotetramer composed of a small (Hexs-a) and large (Hexs-B) subunit.

The enzyme catalyses 3 isopentenyl diphosphate + (2E,6E)-farnesyl diphosphate = all-trans-hexaprenyl diphosphate + 3 diphosphate. Its function is as follows. Catalyzes the condensation of three molecules of isopentenyl diphosphate with farnesyl diphosphate (FPP) to yield (all-E)-hexaprenyl diphosphate (HexPP; C30), the precursor of the prenyl side chain of menaquinone-6. Large subunit Hexs-B catalyzes the condensation reaction and the final product chain length is cooperatively regulated by both the Hexs-A and Hexs-B subunits using the whole size of the hydrophobic cleft as a ruler. The chain is Hexaprenyl-diphosphate synthase small subunit ((2E,6E)-farnesyl-diphosphate specific) (hexs-a) from Micrococcus luteus (Micrococcus lysodeikticus).